We begin with the raw amino-acid sequence, 170 residues long: Guided entry of tail-anchored proteins factor 1 (170 aa).

The Lumenal segment spans residues 1 to 6 (MAAGFN). A helical membrane pass occupies residues 7 to 27 (WFLVLSSVFLCNLVKTFLPSI). Topologically, residues 28 to 96 (SSFLSKIFHK…KSRTAQQAKM (69 aa)) are cytoplasmic. Residues 35–93 (FHKDADQEMEMRTEIQNMKMELSTISMMDEFARYARLERKINKMTDQLKTLVKSRTAQQ) are interaction with GET3/TRC40. A coiled-coil region spans residues 61-91 (MMDEFARYARLERKINKMTDQLKTLVKSRTA). The helical transmembrane segment at 97-117 (KWIVNIAFYILQAALMISLIL) threads the bilayer. Over 118 to 137 (KYYADPVTVVPSKWIAPLER) the chain is Lumenal. Residues 138–158 (LVAFPSGVAGGVGITCWLVVC) traverse the membrane as a helical segment. Residues 159–170 (NKVVALILQAVS) lie on the Cytoplasmic side of the membrane.

The protein belongs to the WRB/GET1 family. As to quaternary structure, component of the Golgi to ER traffic (GET) complex, which is composed of GET1/WRB, CAMLG/GET2 and GET3/TRC40. Within the complex, GET1 and CAMLG form a heterotetramer which is stabilized by phosphatidylinositol binding and which binds to the GET3 homodimer.

It localises to the endoplasmic reticulum membrane. Its function is as follows. Required for the post-translational delivery of tail-anchored (TA) proteins to the endoplasmic reticulum (ER). Together with CAMLG/GET2, acts as a membrane receptor for soluble GET3/TRC40, which recognizes and selectively binds the transmembrane domain of TA proteins in the cytosol. Required to ensure correct topology and ER insertion of CAMLG. In Danio rerio (Zebrafish), this protein is Guided entry of tail-anchored proteins factor 1.